Consider the following 215-residue polypeptide: tRNA (guanine-N(7)-)-methyltransferase (215 aa).

S-adenosyl-L-methionine contacts are provided by glutamate 44, glutamate 69, aspartate 96, and aspartate 118. Aspartate 118 is an active-site residue. Lysine 122 is a substrate binding site. Residues 124–129 (RHEKRR) are interaction with RNA. Substrate is bound by residues aspartate 154 and 192–195 (TEYE).

The protein belongs to the class I-like SAM-binding methyltransferase superfamily. TrmB family.

The enzyme catalyses guanosine(46) in tRNA + S-adenosyl-L-methionine = N(7)-methylguanosine(46) in tRNA + S-adenosyl-L-homocysteine. The protein operates within tRNA modification; N(7)-methylguanine-tRNA biosynthesis. Functionally, catalyzes the formation of N(7)-methylguanine at position 46 (m7G46) in tRNA. This chain is tRNA (guanine-N(7)-)-methyltransferase, found in Limosilactobacillus fermentum (strain NBRC 3956 / LMG 18251) (Lactobacillus fermentum).